Here is a 453-residue protein sequence, read N- to C-terminus: Cytochrome b-c1 complex subunit 2, mitochondrial (453 aa).

A mitochondrion-targeting transit peptide spans 1–14; that stretch reads MKLLSRAGSFSRFY. 3 positions are modified to N6-acetyllysine: lysine 66, lysine 199, and lysine 250. Serine 368 carries the phosphoserine modification.

It belongs to the peptidase M16 family. UQCRC2/QCR2 subfamily. Component of the ubiquinol-cytochrome c oxidoreductase (cytochrome b-c1 complex, complex III, CIII), a multisubunit enzyme composed of 11 subunits. The complex is composed of 3 respiratory subunits cytochrome b, cytochrome c1 and Rieske protein UQCRFS1, 2 core protein subunits UQCRC1/QCR1 and UQCRC2/QCR2, and 6 low-molecular weight protein subunits UQCRH/QCR6, UQCRB/QCR7, UQCRQ/QCR8, UQCR10/QCR9, UQCR11/QCR10 and subunit 9, the cleavage product of Rieske protein UQCRFS1. The complex exists as an obligatory dimer and forms supercomplexes (SCs) in the inner mitochondrial membrane with NADH-ubiquinone oxidoreductase (complex I, CI) and cytochrome c oxidase (complex IV, CIV), resulting in different assemblies (supercomplex SCI(1)III(2)IV(1) and megacomplex MCI(2)III(2)IV(2)). Interacts with RAB5IF. Interacts with STMP1. Acetylation of Lys-159 and Lys-250 is observed in liver mitochondria from fasted mice but not from fed mice. In terms of tissue distribution, expressed in neurons and astrocytes of the cerebral cortex and hippocampus (at protein level).

It localises to the mitochondrion inner membrane. Its function is as follows. Component of the ubiquinol-cytochrome c oxidoreductase, a multisubunit transmembrane complex that is part of the mitochondrial electron transport chain which drives oxidative phosphorylation. The respiratory chain contains 3 multisubunit complexes succinate dehydrogenase (complex II, CII), ubiquinol-cytochrome c oxidoreductase (cytochrome b-c1 complex, complex III, CIII) and cytochrome c oxidase (complex IV, CIV), that cooperate to transfer electrons derived from NADH and succinate to molecular oxygen, creating an electrochemical gradient over the inner membrane that drives transmembrane transport and the ATP synthase. The cytochrome b-c1 complex catalyzes electron transfer from ubiquinol to cytochrome c, linking this redox reaction to translocation of protons across the mitochondrial inner membrane, with protons being carried across the membrane as hydrogens on the quinol. In the process called Q cycle, 2 protons are consumed from the matrix, 4 protons are released into the intermembrane space and 2 electrons are passed to cytochrome c. The 2 core subunits UQCRC1/QCR1 and UQCRC2/QCR2 are homologous to the 2 mitochondrial-processing peptidase (MPP) subunits beta-MPP and alpha-MPP respectively, and they seem to have preserved their MPP processing properties. May be involved in the in situ processing of UQCRFS1 into the mature Rieske protein and its mitochondrial targeting sequence (MTS)/subunit 9 when incorporated into complex III. In Mus musculus (Mouse), this protein is Cytochrome b-c1 complex subunit 2, mitochondrial (Uqcrc2).